Here is a 106-residue protein sequence, read N- to C-terminus: Isocitrate dehydrogenase [NAD] subunit gamma, mitochondrial (106 aa).

This sequence belongs to the isocitrate and isopropylmalate dehydrogenases family. In terms of assembly, heterooligomer of subunits alpha (IDH3A), beta (IDH3B), and gamma (IDH3G) in the apparent ratio of 2:1:1. The heterodimer containing one IDH3A and one IDH3B subunit and the heterodimer containing one IDH3A and one IDH3G subunit assemble into a heterotetramer (which contains two subunits of IDH3A, one of IDH3B and one of IDH3G) and further into the heterooctamer.

The protein resides in the mitochondrion. The heterotetramer and the heterodimer composed of IDH3A and IDH3G subunits can be allosterically activated by citrate (CIT) or/and ADP, and the two activators can act independently or synergistically. The heterodimer composed of IDH3A and IDH3B subunits cannot be allosterically regulated and the allosteric regulation of the heterotetramer is through the IDH3G subunit and not the IDH3B subunit. The IDH3G subunit contains the allosteric site which consists of a CIT-binding site and an ADP-binding site, and the binding of CIT and ADP causes conformational changes at the allosteric site which are transmitted to the active site in the catalytic subunit (IDH3A) through a cascade of conformational changes at the heterodimer interface, leading to stabilization of the isocitrate-binding at the active site and thus activation of the enzyme. ATP can activate the heterotetramer and the heterodimer composed of IDH3A and IDH3G subunits at low concentrations but inhibits their activities at high concentrations, whereas ATP exhibits only inhibitory effect on the heterodimer composed of IDH3A and IDH3B subunits. Its function is as follows. Regulatory subunit which plays a role in the allosteric regulation of the enzyme catalyzing the decarboxylation of isocitrate (ICT) into alpha-ketoglutarate. The heterodimer composed of the alpha (IDH3A) and beta (IDH3B) subunits and the heterodimer composed of the alpha (IDH3A) and gamma (IDH3G) subunits, have considerable basal activity but the full activity of the heterotetramer (containing two subunits of IDH3A, one of IDH3B and one of IDH3G) requires the assembly and cooperative function of both heterodimers. In Sus scrofa (Pig), this protein is Isocitrate dehydrogenase [NAD] subunit gamma, mitochondrial (IDH3G).